The sequence spans 571 residues: Germacrene B synthase TPS16CC (571 aa).

The (2E,6E)-farnesyl diphosphate site is built by arginine 287, aspartate 324, aspartate 328, arginine 465, and aspartate 468. Positions 324 and 328 each coordinate Mg(2+). The DDXXD motif motif lies at 324–328; it reads DDIYD. Mg(2+)-binding residues include aspartate 468, serine 472, and glutamate 476.

Belongs to the terpene synthase family. Tpsb subfamily. The cofactor is Mg(2+). Mn(2+) is required as a cofactor. In terms of tissue distribution, highly expressed in glandular trichomes.

The enzyme catalyses (2E,6E)-farnesyl diphosphate = (1E,4E)-germacrene B + diphosphate. The protein operates within secondary metabolite biosynthesis; terpenoid biosynthesis. Functionally, involved in sesquiterpene olefins biosynthesis, constituants of cannabinoids and terpenoids-rich resins. Catalyzes mainly the conversion of (2E)-farnesyl diphosphate to germacrene B, which is spontaneously converted to gamma-elemene as a thermal degradation product. The polypeptide is Germacrene B synthase TPS16CC (Cannabis sativa (Hemp)).